The sequence spans 300 residues: B1 kinase (300 aa).

The 267-residue stretch at 16 to 282 (WVVGPLIGKG…ITMVNSLTYF (267 aa)) folds into the Protein kinase domain. Residues 22–30 (IGKGGFGSI) and lysine 45 each bind ATP. Aspartate 147 serves as the catalytic Proton acceptor.

The protein belongs to the protein kinase superfamily. Ser/Thr protein kinase family. Poxviruses subfamily. As to quaternary structure, interacts with host JIP1; this interaction increases the amount of MAPK bound to JIP1 and subsequently increases the activity of transcription factors, such as JUN, that respond to these complexes. Interacts with protein OPG198; this interaction inhibits the repressive activity of OPG198 pseudokinase on viral replication factory formation. Mg(2+) is required as a cofactor. Post-translationally, autophosphorylated.

The protein localises to the virion. The protein resides in the host cytoplasm. The enzyme catalyses L-seryl-[protein] + ATP = O-phospho-L-seryl-[protein] + ADP + H(+). It catalyses the reaction L-threonyl-[protein] + ATP = O-phospho-L-threonyl-[protein] + ADP + H(+). Its function is as follows. Essential serine/threonine-protein kinase that plays different role in the viral life cycle. Phosphorylates the host small ribosomal protein RACK1 thereby customizing the ribosomes to a state optimal for viral mRNAs (which contain poly-A leaders) but not for host mRNAs. Facilitates viral DNA replication by inhibiting host BANF1, a cellular host defense responsive to foreign DNA. Phosphorylates host BANF1 on serine and threonine residues; this leads to BANF1 relocalization to the cytoplasm, loss of dimerization and impaired DNA binding activity. Indeed, BANF1 activity depends on its DNA-binding property which is blocked by VPK1-mediated phosphorylation. Required for viral intermediate genes expression, probably by inhibiting host BANF1. Modulates cellular responses via host JUN by two different mechanisms, either by direct phosphorylation or by modulation of upstream JIP1-MAPK complexes. Seems to participate in the accumulation/processing of late proteins and thus in virion maturation. In addition, inhibits B12 repressive activity on viral DNA replication via a phosphorylation-dependent mechanism. This is B1 kinase (OPG187) from Vaccinia virus (strain Ankara) (VACV).